We begin with the raw amino-acid sequence, 208 residues long: Outer-membrane lipoprotein carrier protein (208 aa).

Positions 1 to 22 are cleaved as a signal peptide; that stretch reads MKKIFTIAALSLPLFCHLPAMA.

Belongs to the LolA family. As to quaternary structure, monomer.

It is found in the periplasm. In terms of biological role, participates in the translocation of lipoproteins from the inner membrane to the outer membrane. Only forms a complex with a lipoprotein if the residue after the N-terminal Cys is not an aspartate (The Asp acts as a targeting signal to indicate that the lipoprotein should stay in the inner membrane). This Shewanella pealeana (strain ATCC 700345 / ANG-SQ1) protein is Outer-membrane lipoprotein carrier protein.